The chain runs to 322 residues: Putative nickel/cobalt efflux system HI_1248 (322 aa).

Transmembrane regions (helical) follow at residues 7 to 27, 54 to 74, 100 to 120, 137 to 157, 228 to 248, and 294 to 314; these read GLVL…WFFL, AGTT…LGPG, LSSL…VVVL, TALL…LRAY, IFVL…LAVL, and LIAG…TTIS.

Belongs to the NiCoT transporter (TC 2.A.52) family.

It is found in the cell membrane. Its function is as follows. Efflux system for nickel and cobalt. The sequence is that of Putative nickel/cobalt efflux system HI_1248 from Haemophilus influenzae (strain ATCC 51907 / DSM 11121 / KW20 / Rd).